A 602-amino-acid polypeptide reads, in one-letter code: T-box transcription factor TBX15 (602 aa).

Residues 43-95 form a disordered region; that stretch reads SMEALSPAGPLGDTDDPATHGLEPHPDSEQSTGSDSEVLTERTSCSFSTHTDL. Polar residues predominate over residues 71-94; that stretch reads EQSTGSDSEVLTERTSCSFSTHTD. Positions 122 to 304 form a DNA-binding region, T-box; that stretch reads LWKRFHDIGT…RNPFAKGFRD (183 aa). The residue at position 330 (threonine 330) is a Phosphothreonine. Disordered regions lie at residues 338–369 and 425–444; these read QKQQ…LSPS and QSGT…QRTP. A compositionally biased stretch (low complexity) spans 346–369; that stretch reads GTSPTTSSTGTPSPSASSHLLSPS.

In terms of assembly, can form a heterodimer with TBX18.

The protein resides in the nucleus. Probable transcriptional regulator involved in the development of the skeleton of the limb, vertebral column and head. Acts by controlling the number of mesenchymal precursor cells and chondrocytes. This chain is T-box transcription factor TBX15 (Tbx15), found in Mus musculus (Mouse).